A 460-amino-acid chain; its full sequence is ATP synthase subunit beta (460 aa).

G150–T157 is a binding site for ATP.

Belongs to the ATPase alpha/beta chains family. F-type ATPases have 2 components, CF(1) - the catalytic core - and CF(0) - the membrane proton channel. CF(1) has five subunits: alpha(3), beta(3), gamma(1), delta(1), epsilon(1). CF(0) has three main subunits: a(1), b(2) and c(9-12). The alpha and beta chains form an alternating ring which encloses part of the gamma chain. CF(1) is attached to CF(0) by a central stalk formed by the gamma and epsilon chains, while a peripheral stalk is formed by the delta and b chains.

It is found in the cell inner membrane. The enzyme catalyses ATP + H2O + 4 H(+)(in) = ADP + phosphate + 5 H(+)(out). In terms of biological role, produces ATP from ADP in the presence of a proton gradient across the membrane. The catalytic sites are hosted primarily by the beta subunits. This is ATP synthase subunit beta from Photorhabdus laumondii subsp. laumondii (strain DSM 15139 / CIP 105565 / TT01) (Photorhabdus luminescens subsp. laumondii).